Consider the following 174-residue polypeptide: Gamma-crystallin A (174 aa).

2 Beta/gamma crystallin 'Greek key' domains span residues 2 to 40 (GKIT…RVDS) and 41 to 83 (GCWM…RSIP). A connecting peptide region spans residues 84–87 (YTSS). Beta/gamma crystallin 'Greek key' domains follow at residues 88-128 (HRIR…HVLE) and 129-171 (GSWV…RRVM).

This sequence belongs to the beta/gamma-crystallin family.

Its function is as follows. Crystallins are the dominant structural components of the vertebrate eye lens. The polypeptide is Gamma-crystallin A (Cryga) (Rattus norvegicus (Rat)).